An 85-amino-acid chain; its full sequence is NAD(P)H-quinone oxidoreductase subunit O (85 aa).

Belongs to the complex I NdhO subunit family. As to quaternary structure, NDH-1 can be composed of about 15 different subunits; different subcomplexes with different compositions have been identified which probably have different functions.

It is found in the cellular thylakoid membrane. It catalyses the reaction a plastoquinone + NADH + (n+1) H(+)(in) = a plastoquinol + NAD(+) + n H(+)(out). The enzyme catalyses a plastoquinone + NADPH + (n+1) H(+)(in) = a plastoquinol + NADP(+) + n H(+)(out). In terms of biological role, NDH-1 shuttles electrons from an unknown electron donor, via FMN and iron-sulfur (Fe-S) centers, to quinones in the respiratory and/or the photosynthetic chain. The immediate electron acceptor for the enzyme in this species is believed to be plastoquinone. Couples the redox reaction to proton translocation, and thus conserves the redox energy in a proton gradient. Cyanobacterial NDH-1 also plays a role in inorganic carbon-concentration. This is NAD(P)H-quinone oxidoreductase subunit O from Synechococcus sp. (strain CC9311).